The following is a 452-amino-acid chain: Imidazoleglycerol-phosphate dehydratase (452 aa).

A unknown activity region spans residues Met1–Gly233. Residues Leu234–Ala452 are imidazoleglycerol-phosphate dehydratase.

This sequence belongs to the imidazoleglycerol-phosphate dehydratase family.

The enzyme catalyses D-erythro-1-(imidazol-4-yl)glycerol 3-phosphate = 3-(imidazol-4-yl)-2-oxopropyl phosphate + H2O. It participates in amino-acid biosynthesis; L-histidine biosynthesis; L-histidine from 5-phospho-alpha-D-ribose 1-diphosphate: step 6/9. This chain is Imidazoleglycerol-phosphate dehydratase (HIS3), found in Phytophthora nicotianae (Potato buckeye rot agent).